The chain runs to 226 residues: Large ribosomal subunit protein uL1 (226 aa).

The protein belongs to the universal ribosomal protein uL1 family. In terms of assembly, part of the 50S ribosomal subunit.

Its function is as follows. Binds directly to 23S rRNA. The L1 stalk is quite mobile in the ribosome, and is involved in E site tRNA release. Functionally, protein L1 is also a translational repressor protein, it controls the translation of the L11 operon by binding to its mRNA. In Borreliella burgdorferi (strain ATCC 35210 / DSM 4680 / CIP 102532 / B31) (Borrelia burgdorferi), this protein is Large ribosomal subunit protein uL1.